The primary structure comprises 332 residues: T-cell surface glycoprotein CD1b2 (332 aa).

The signal sequence occupies residues 1–17; sequence MLLLVLALLAVLFPAGD. At 18–301 the chain is on the extracellular side; the sequence is TQDAFPEPIS…ILYWGNSSIG (284 aa). Asn-38, Asn-75, and Asn-146 each carry an N-linked (GlcNAc...) asparagine glycan. 3 cysteine pairs are disulfide-bonded: Cys-120-Cys-184, Cys-149-Cys-163, and Cys-224-Cys-279. The 111-residue stretch at 185-295 folds into the Ig-like domain; sequence PRYLMSVLEA…LGGQDIILYW (111 aa). The N-linked (GlcNAc...) asparagine glycan is linked to Asn-297. The chain crosses the membrane as a helical span at residues 302-322; it reads WIILAVFVSCLIVLLFYVLWF. Over 323–332 the chain is Cytoplasmic; it reads YKHWSYQDIL. The Internalization signal motif lies at 328–331; that stretch reads YQDI.

In terms of assembly, heterodimer with B2M (beta-2-microglobulin). Interacts with saposin C.

It is found in the cell membrane. The protein resides in the endosome membrane. It localises to the lysosome membrane. Functionally, antigen-presenting protein that binds self and non-self lipid and glycolipid antigens and presents them to T-cell receptors on natural killer T-cells. This chain is T-cell surface glycoprotein CD1b2 (CD1B2), found in Cavia porcellus (Guinea pig).